A 159-amino-acid polypeptide reads, in one-letter code: Ribosomal RNA large subunit methyltransferase H (159 aa).

Residues L76, G108, and 127 to 132 (FSKMTF) each bind S-adenosyl-L-methionine.

It belongs to the RNA methyltransferase RlmH family. Homodimer.

The protein resides in the cytoplasm. It catalyses the reaction pseudouridine(1915) in 23S rRNA + S-adenosyl-L-methionine = N(3)-methylpseudouridine(1915) in 23S rRNA + S-adenosyl-L-homocysteine + H(+). Functionally, specifically methylates the pseudouridine at position 1915 (m3Psi1915) in 23S rRNA. This chain is Ribosomal RNA large subunit methyltransferase H, found in Halalkalibacterium halodurans (strain ATCC BAA-125 / DSM 18197 / FERM 7344 / JCM 9153 / C-125) (Bacillus halodurans).